The chain runs to 252 residues: 5-oxoprolinase subunit A (252 aa).

The protein belongs to the LamB/PxpA family. In terms of assembly, forms a complex composed of PxpA, PxpB and PxpC.

It catalyses the reaction 5-oxo-L-proline + ATP + 2 H2O = L-glutamate + ADP + phosphate + H(+). Its function is as follows. Catalyzes the cleavage of 5-oxoproline to form L-glutamate coupled to the hydrolysis of ATP to ADP and inorganic phosphate. The protein is 5-oxoprolinase subunit A of Bacillus cytotoxicus (strain DSM 22905 / CIP 110041 / 391-98 / NVH 391-98).